Consider the following 883-residue polypeptide: MTSERYNARDAEPRWQAEWDRQAIFATKNDDPREKYYVLEMFPYPSGRIHIGHVRNYTLGDVIARYMRARGYNVLHPMGWDAFGLPAENAAIERKIAPKAWTYDNIKAMKKQLRSIGLSLDWSREIATCDPAYYKHQQKMFLDFLRAGLAEREKRKINWDPVDMTVLANEQVIDGRGWRSGAVVEQREMNQWVFKITKFSQELLDALGTLDRWPDKVRLMQRNWIGRSEGLLIRFALDATTTPNNESELKIFTTRPDTLFGARFMAIAPDHPLAQAAAKDNPALAGFIAECKQRGTAQAEIDTAEKMGFDTGIRAIHPFDAAWALPVYVANFILMEYGTGAIFGCPAHDQRDLDFVNKYGLGNTPVVCPEGQDPASFVITDTAYDGDGRMINSRFLDGMSADAAKEEVAKRLEGETRGNEPVAERKVNFRLRDWGISRQRYWGCPIPVIHCPNCDVVPVPEKDLPVTLPEDVTFDRPGNALDHHPTWKHVDCPKCGGKATRETDTMDTFVDSSWYFARFTDPWNDSAPTTREVADRMLPVDQYIGGVEHAILHLLYSRFFTRAMKATGHLGMDEPFKGMFTQGMVVHETYRKPDGGWASPEEVRIEVDGNNRRATLITTGEPVEIGAVEKMSKSKRNTVDPDDIIGSYGADTARWFMLSDSPPDRDVIWSEEGVQGAARFMQRLWRLVNEAADAGKAAPQDRPATFGSDALTLRKAAHGALDRVSTGIERLHFNVCLANIREFANELADALARSRSNKSAPARDLAPDLSWSLREAAIILVQIFSPMMPHLAEECWQRALGQTGLVSQARWPQIEPDLLIEDSITLPVQVNGKKRGEVTVASDAGNPEIEAAVLALDAVKQALGGKQARKIIIVPRRIVSVVG.

The 'HIGH' region motif lies at 43–53 (PYPSGRIHIGH). The short motif at 630 to 634 (KMSKS) is the 'KMSKS' region element. ATP is bound at residue Lys-633.

It belongs to the class-I aminoacyl-tRNA synthetase family.

It localises to the cytoplasm. The catalysed reaction is tRNA(Leu) + L-leucine + ATP = L-leucyl-tRNA(Leu) + AMP + diphosphate. The chain is Leucine--tRNA ligase from Nitrobacter winogradskyi (strain ATCC 25391 / DSM 10237 / CIP 104748 / NCIMB 11846 / Nb-255).